The sequence spans 148 residues: Endoribonuclease YbeY (148 aa).

The Zn(2+) site is built by His113, His117, and His123.

It belongs to the endoribonuclease YbeY family. Requires Zn(2+) as cofactor.

It is found in the cytoplasm. Its function is as follows. Single strand-specific metallo-endoribonuclease involved in late-stage 70S ribosome quality control and in maturation of the 3' terminus of the 16S rRNA. This Borrelia duttonii (strain Ly) protein is Endoribonuclease YbeY.